A 190-amino-acid chain; its full sequence is Putative serine carboxypeptidase-like 54 (190 aa).

A signal peptide spans 1–25 (MATKTFSLPFLLIVCIFSQLSSTFG). N-linked (GlcNAc...) asparagine glycans are attached at residues asparagine 58, asparagine 59, and asparagine 105.

This sequence belongs to the peptidase S10 family.

The protein resides in the secreted. In Arabidopsis thaliana (Mouse-ear cress), this protein is Putative serine carboxypeptidase-like 54 (SCPL54).